We begin with the raw amino-acid sequence, 241 residues long: Acyl-protein thioesterase 1 (241 aa).

Residues Ser122, Asp178, and His211 each act as charge relay system in the active site.

The protein belongs to the AB hydrolase superfamily. AB hydrolase 2 family.

The protein resides in the cytoplasm. It localises to the nucleus. The catalysed reaction is S-hexadecanoyl-L-cysteinyl-[protein] + H2O = L-cysteinyl-[protein] + hexadecanoate + H(+). Hydrolyzes fatty acids from S-acylated cysteine residues in proteins with a strong preference for palmitoylated G-alpha proteins over other acyl substrates. Mediates the deacylation of G-alpha proteins such as GPA1 in vivo, but has weak or no activity toward palmitoylated Ras proteins. Has weak lysophospholipase activity in vitro; however such activity may not exist in vivo. The protein is Acyl-protein thioesterase 1 of Aspergillus fumigatus (strain ATCC MYA-4609 / CBS 101355 / FGSC A1100 / Af293) (Neosartorya fumigata).